Reading from the N-terminus, the 503-residue chain is Lysine--tRNA ligase (503 aa).

Positions 412 and 419 each coordinate Mg(2+).

The protein belongs to the class-II aminoacyl-tRNA synthetase family. In terms of assembly, homodimer. Mg(2+) is required as a cofactor.

The protein localises to the cytoplasm. It catalyses the reaction tRNA(Lys) + L-lysine + ATP = L-lysyl-tRNA(Lys) + AMP + diphosphate. In Idiomarina loihiensis (strain ATCC BAA-735 / DSM 15497 / L2-TR), this protein is Lysine--tRNA ligase.